The chain runs to 660 residues: MADPSSYRPAPGTIPESPGVYRFRDGTGRVIYVGKARNLRSRLNSYFADPVNLHQRTRQMVFTAESVDWISVATEVEALQQEFTEIKQYDPRFNVRYRDDKSYPYLAVTVDEEFPRLQVMRGAKRRGVRYFGPYSHAWAIRETLDLLLRVFPARTCSSGVFKRAGQVGRPCLLGYIGKCSAPCVGSVSAEEHRDIVNGFCDFMAGRTDAMVRRLEREMAEASAELEFERAARLRDDLAALRRAMEKQTVVFGDGTDADVVAFADDPLEAAVQVFHVRDGRIRGQRGWVVEKTEDLTAGDLVHHFCTQVYGGEHGEAHVPRELLVPELPADVEALADWLSEHRGSRVTLRVPQRGDKRALLETVARNATDALARHKLKRAGDLTTRSKALDEIADTLGMRTAPLRIECFDISQIQGTDVVASMVVFEDGLPRKSEYRRFIIRGATDDLSAMSEVLRRRFARYLDARAETGEAGVESAGDPDAPAGPDAPDEPRVGTLVDPTTGRPRKFAYPPQLVVVDGGAPQVAAAAQALAELGVDDVALCGLAKRLEEVWLPDDDFPAILPRTSEGLYLLQRVRDEAHRFAITFHRQRRSRRMTESALDRVSGLGEVRRKALLRHFGSLKRLAAASVEEITEVPGIGKRTAEAILAALADPTGQSEPRR.

The 80-residue stretch at 16 to 95 (ESPGVYRFRD…IKQYDPRFNV (80 aa)) folds into the GIY-YIG domain. The 36-residue stretch at 208 to 243 (DAMVRRLEREMAEASAELEFERAARLRDDLAALRRA) folds into the UVR domain. Residues 469–501 (GEAGVESAGDPDAPAGPDAPDEPRVGTLVDPTT) are disordered. The segment covering 476-486 (AGDPDAPAGPD) has biased composition (low complexity).

It belongs to the UvrC family. Interacts with UvrB in an incision complex.

It is found in the cytoplasm. Functionally, the UvrABC repair system catalyzes the recognition and processing of DNA lesions. UvrC both incises the 5' and 3' sides of the lesion. The N-terminal half is responsible for the 3' incision and the C-terminal half is responsible for the 5' incision. This is UvrABC system protein C from Salinispora arenicola (strain CNS-205).